The following is a 396-amino-acid chain: Elongation factor Tu (396 aa).

The tr-type G domain occupies 11–205; the sequence is KPHVNIGTIG…TVDEYIPTPE (195 aa). The segment at 20–27 is G1; it reads GHVDHGKT. 20–27 is a binding site for GTP; sequence GHVDHGKT. A Mg(2+)-binding site is contributed by Thr27. Positions 61 to 65 are G2; it reads GITIN. The tract at residues 82–85 is G3; sequence DAPG. Residues 82 to 86 and 137 to 140 each bind GTP; these read DAPGH and NKVD. Positions 137 to 140 are G4; that stretch reads NKVD. The interval 175–177 is G5; the sequence is SAL.

The protein belongs to the TRAFAC class translation factor GTPase superfamily. Classic translation factor GTPase family. EF-Tu/EF-1A subfamily. Monomer.

Its subcellular location is the cytoplasm. It catalyses the reaction GTP + H2O = GDP + phosphate + H(+). Functionally, GTP hydrolase that promotes the GTP-dependent binding of aminoacyl-tRNA to the A-site of ribosomes during protein biosynthesis. The protein is Elongation factor Tu of Lactobacillus gasseri (strain ATCC 33323 / DSM 20243 / BCRC 14619 / CIP 102991 / JCM 1131 / KCTC 3163 / NCIMB 11718 / NCTC 13722 / AM63).